The chain runs to 488 residues: Inosine-5'-monophosphate dehydrogenase (488 aa).

2 CBS domains span residues 95–153 and 157–213; these read VITN…SIKI and MTKE…PHAA. NAD(+) is bound by residues aspartate 250 and 300 to 302; that span reads GIG. K(+)-binding residues include glycine 302 and glycine 304. Serine 305 is an IMP binding site. Position 307 (cysteine 307) interacts with K(+). Cysteine 307 (thioimidate intermediate) is an active-site residue. Residues 340 to 342, 363 to 364, and 387 to 391 each bind IMP; these read DGG, GS, and YRGMG. The active-site Proton acceptor is arginine 403. Glutamate 417 is an IMP binding site. Residues 467–488 form a disordered region; that stretch reads AGLAESHPHNVQITKESPNYSF. 3 residues coordinate K(+): glutamate 471, serine 472, and histidine 473. Residues 475–488 show a composition bias toward polar residues; it reads HNVQITKESPNYSF.

It belongs to the IMPDH/GMPR family. As to quaternary structure, homotetramer. The cofactor is K(+).

The enzyme catalyses IMP + NAD(+) + H2O = XMP + NADH + H(+). Its pathway is purine metabolism; XMP biosynthesis via de novo pathway; XMP from IMP: step 1/1. With respect to regulation, mycophenolic acid (MPA) is a non-competitive inhibitor that prevents formation of the closed enzyme conformation by binding to the same site as the amobile flap. In contrast, mizoribine monophosphate (MZP) is a competitive inhibitor that induces the closed conformation. MPA is a potent inhibitor of mammalian IMPDHs but a poor inhibitor of the bacterial enzymes. MZP is a more potent inhibitor of bacterial IMPDH. In terms of biological role, catalyzes the conversion of inosine 5'-phosphate (IMP) to xanthosine 5'-phosphate (XMP), the first committed and rate-limiting step in the de novo synthesis of guanine nucleotides, and therefore plays an important role in the regulation of cell growth. The protein is Inosine-5'-monophosphate dehydrogenase of Staphylococcus haemolyticus (strain JCSC1435).